Reading from the N-terminus, the 165-residue chain is REP-associated tyrosine transposase (165 aa).

The protein belongs to the transposase 17 family. RAYT subfamily. As to quaternary structure, monomer.

With respect to regulation, cleavage occurs in the presence of magnesium, but is much more pronounced with manganese. Functionally, transposase that is always flanked by repeated extragenic palindrome (REP) sequences, which are clustered in structures called bacterial interspersed mosaic elements (BIMEs). RayT catalyzes cleavage and recombination of BIMEs. Binds REP sequences and cleaves BIMEs both upstream and downstream of the REP sequence. Could be important in the creation of BIME variability and amplification. The polypeptide is REP-associated tyrosine transposase (Escherichia coli (strain K12)).